The following is a 187-amino-acid chain: MTTAQKVQPRLKERYRSEIRDALRKQFGYGNVMQIPTVTKVVVNMGVGEAARDAKLINGAVNDLALITGQKPEVRRARKSIAQFKLREGMPVGVRVTLRGDRMWEFLDRLTSIALPRIRDFRGLSPKQFDGVGNYTFGLAEQAVFHEVDVDKIDRVRGMDINVVTSAATDDEGRALLRALGFPFKEN.

The protein belongs to the universal ribosomal protein uL5 family. In terms of assembly, part of the 50S ribosomal subunit; part of the 5S rRNA/L5/L18/L25 subcomplex. Contacts the 5S rRNA and the P site tRNA. Forms a bridge to the 30S subunit in the 70S ribosome.

Functionally, this is one of the proteins that bind and probably mediate the attachment of the 5S RNA into the large ribosomal subunit, where it forms part of the central protuberance. In the 70S ribosome it contacts protein S13 of the 30S subunit (bridge B1b), connecting the 2 subunits; this bridge is implicated in subunit movement. Contacts the P site tRNA; the 5S rRNA and some of its associated proteins might help stabilize positioning of ribosome-bound tRNAs. This is Large ribosomal subunit protein uL5 from Mycobacterium bovis (strain ATCC BAA-935 / AF2122/97).